The primary structure comprises 156 residues: Cyclic pyranopterin monophosphate synthase (156 aa).

Substrate contacts are provided by residues 73–75 and 110–111; these read LCH and ME. Asp-125 is a catalytic residue.

This sequence belongs to the MoaC family. In terms of assembly, homohexamer; trimer of dimers.

It carries out the reaction (8S)-3',8-cyclo-7,8-dihydroguanosine 5'-triphosphate = cyclic pyranopterin phosphate + diphosphate. Its pathway is cofactor biosynthesis; molybdopterin biosynthesis. Catalyzes the conversion of (8S)-3',8-cyclo-7,8-dihydroguanosine 5'-triphosphate to cyclic pyranopterin monophosphate (cPMP). The sequence is that of Cyclic pyranopterin monophosphate synthase from Pseudomonas putida (strain GB-1).